A 590-amino-acid chain; its full sequence is UvrABC system protein C (590 aa).

A GIY-YIG domain is found at 14 to 91; sequence DQPGCYLMKD…IKKYDPKYNV (78 aa). Residues 196–231 enclose the UVR domain; sequence NEVKKELEAKMLEASENLQFERAKEFRDQIAHIEST.

It belongs to the UvrC family. As to quaternary structure, interacts with UvrB in an incision complex.

It is found in the cytoplasm. Its function is as follows. The UvrABC repair system catalyzes the recognition and processing of DNA lesions. UvrC both incises the 5' and 3' sides of the lesion. The N-terminal half is responsible for the 3' incision and the C-terminal half is responsible for the 5' incision. This is UvrABC system protein C from Bacillus licheniformis (strain ATCC 14580 / DSM 13 / JCM 2505 / CCUG 7422 / NBRC 12200 / NCIMB 9375 / NCTC 10341 / NRRL NRS-1264 / Gibson 46).